A 499-amino-acid polypeptide reads, in one-letter code: Phenylalanine--tRNA ligase alpha subunit B (499 aa).

L-phenylalanine-binding positions include threonine 330, 373–375, and tyrosine 413; that span reads QIE. A Mg(2+)-binding site is contributed by glutamate 415. Residue phenylalanine 439 participates in L-phenylalanine binding.

This sequence belongs to the class-II aminoacyl-tRNA synthetase family. Phe-tRNA synthetase alpha subunit type 2 subfamily. In terms of assembly, heterotetramer; dimer of two heterodimers formed by alpha and beta subunits. It depends on Mg(2+) as a cofactor.

The protein localises to the cytoplasm. The catalysed reaction is tRNA(Phe) + L-phenylalanine + ATP = L-phenylalanyl-tRNA(Phe) + AMP + diphosphate + H(+). The protein is Phenylalanine--tRNA ligase alpha subunit B (farsa-b) of Xenopus laevis (African clawed frog).